A 239-amino-acid polypeptide reads, in one-letter code: Tetraspanin-9 (239 aa).

Residues Met1–Met13 lie on the Cytoplasmic side of the membrane. The chain crosses the membrane as a helical span at residues Phe14–Leu34. The Extracellular portion of the chain corresponds to Ser35–Asn55. Residues Leu56–Ile76 traverse the membrane as a helical segment. Residues Lys77–Ser85 are Cytoplasmic-facing. A helical membrane pass occupies residues Phe86–Val106. The Extracellular segment spans residues Tyr107–His203. Residue Asn180 is glycosylated (N-linked (GlcNAc...) asparagine). The helical transmembrane segment at Val204–Met224 threads the bilayer. Topologically, residues Thr225–Ala239 are cytoplasmic.

It belongs to the tetraspanin (TM4SF) family. As to quaternary structure, found in a complex with GP6. Post-translationally, glycosylated. As to expression, strongly expressed in megakaryocytes, platelets and lung. Weakly expressed in bone marrow, brain and kidney (at protein level).

The protein localises to the membrane. This Mus musculus (Mouse) protein is Tetraspanin-9 (Tspan9).